The primary structure comprises 326 residues: Small ribosomal subunit biogenesis GTPase RsgA (326 aa).

Residues Leu80–Phe241 form the CP-type G domain. GTP is bound by residues Asn129–Asp132 and Gly183–Thr191. Zn(2+) is bound by residues Cys265, Cys270, His272, and Cys278.

It belongs to the TRAFAC class YlqF/YawG GTPase family. RsgA subfamily. Monomer. Associates with 30S ribosomal subunit, binds 16S rRNA. Zn(2+) serves as cofactor.

Its subcellular location is the cytoplasm. One of several proteins that assist in the late maturation steps of the functional core of the 30S ribosomal subunit. Helps release RbfA from mature subunits. May play a role in the assembly of ribosomal proteins into the subunit. Circularly permuted GTPase that catalyzes slow GTP hydrolysis, GTPase activity is stimulated by the 30S ribosomal subunit. In Flavobacterium psychrophilum (strain ATCC 49511 / DSM 21280 / CIP 103535 / JIP02/86), this protein is Small ribosomal subunit biogenesis GTPase RsgA.